An 852-amino-acid polypeptide reads, in one-letter code: Taste receptor type 1 member 3 (852 aa).

The signal sequence occupies residues 1–20 (MLGPAVLGLSLWALLQPGAG). At 21–570 (APLCLSQQLR…FLAWGEPAVL (550 aa)) the chain is on the extracellular side. N-linked (GlcNAc...) asparagine glycosylation is found at Asn-85, Asn-130, Asn-264, Asn-285, Asn-380, Asn-411, Asn-432, and Asn-475. A helical membrane pass occupies residues 571-591 (LLLLLLSLALGLVLAALGLFV). The Cytoplasmic portion of the chain corresponds to 592–603 (HHRDSPLVQASG). The chain crosses the membrane as a helical span at residues 604-624 (GPLACFGLVCLGLVCLSVLLF). Topologically, residues 625-639 (PGQPSPAQCLAQQPL) are extracellular. The chain crosses the membrane as a helical span at residues 640-660 (SHLPLTGCLSTLFLQAAEIFV). Residues 661-682 (ESELPLSWADRLSGCLRGPWAW) are Cytoplasmic-facing. A helical membrane pass occupies residues 683–703 (LVVLLAMLVEVALCTWYLVAF). Residues 704–729 (PPEVVTDWHMLPTEALVHCRTRSWVS) are Extracellular-facing. The helical transmembrane segment at 730 to 750 (FGLAHATNATLAFLCFLGTFL) threads the bilayer. Residues 751 to 762 (VRSQPGRYNRAR) are Cytoplasmic-facing. A helical transmembrane segment spans residues 763–783 (GLTFAMLAYFITWVSFVPLLA). Residues 784 to 791 (NVQVVLRP) are Extracellular-facing. Residues 792–812 (AVQMGALLLCVLGILAAFHLP) form a helical membrane-spanning segment. Topologically, residues 813 to 852 (RCYLLIRQPGLNTPEFFLGGGPGDAQGRNDGDTGNQGKHE) are cytoplasmic. The segment at 833 to 852 (GPGDAQGRNDGDTGNQGKHE) is disordered. The span at 839–852 (GRNDGDTGNQGKHE) shows a compositional bias: basic and acidic residues.

This sequence belongs to the G-protein coupled receptor 3 family. TAS1R subfamily. In terms of assembly, forms homodimers or heterodimers with TAS1R1 and TAS1R2.

It is found in the cell membrane. Putative taste receptor. TAS1R1/TAS1R3 responds to the umami taste stimulus (the taste of monosodium glutamate). TAS1R2/TAS1R3 recognizes diverse natural and synthetic sweeteners. TAS1R3 is essential for the recognition and response to the disaccharide trehalose. Sequence differences within and between species can significantly influence the selectivity and specificity of taste responses. This Gorilla gorilla gorilla (Western lowland gorilla) protein is Taste receptor type 1 member 3 (TAS1R3).